We begin with the raw amino-acid sequence, 430 residues long: 3-phosphoshikimate 1-carboxyvinyltransferase (430 aa).

The disordered stretch occupies residues methionine 1 to lysine 20. Residues lysine 20, serine 21, and arginine 25 each contribute to the 3-phosphoshikimate site. Position 20 (lysine 20) interacts with phosphoenolpyruvate. Glycine 91 and arginine 119 together coordinate phosphoenolpyruvate. 3-phosphoshikimate is bound by residues serine 164, serine 165, glutamine 166, serine 192, aspartate 312, and lysine 339. Residue glutamine 166 coordinates phosphoenolpyruvate. Residue aspartate 312 is the Proton acceptor of the active site. Positions 343 and 386 each coordinate phosphoenolpyruvate.

It belongs to the EPSP synthase family. Monomer.

The protein localises to the cytoplasm. The catalysed reaction is 3-phosphoshikimate + phosphoenolpyruvate = 5-O-(1-carboxyvinyl)-3-phosphoshikimate + phosphate. The protein operates within metabolic intermediate biosynthesis; chorismate biosynthesis. Its function is as follows. Catalyzes the transfer of the enolpyruvyl moiety of phosphoenolpyruvate (PEP) to the 5-hydroxyl of shikimate-3-phosphate (S3P) to produce enolpyruvyl shikimate-3-phosphate and inorganic phosphate. The polypeptide is 3-phosphoshikimate 1-carboxyvinyltransferase (Halobacterium salinarum (strain ATCC 29341 / DSM 671 / R1)).